Here is a 1427-residue protein sequence, read N- to C-terminus: Double-stranded DNA deaminase toxin A (1427 aa).

The next 2 helical transmembrane spans lie at 16-36 and 43-63; these read ALAG…AVAF and FGVA…LLSI. 4 YD repeats span residues 469–501, 548–584, 720–747, and 977–1008; these read RVVE…DGRT, YDDA…GPDG, NARG…GRLR, and YDGA…ISRA. A C-terminal effector domain, has cytidine deaminase activity region spans residues 1264-1427; sequence IGLNGGANVY…SPKSPTKGGC (164 aa). Zn(2+) is bound by residues His1345, Cys1373, and Cys1376. Residues 1402–1427 are disordered; that stretch reads KRGATGETKVFTGNSNSPKSPTKGGC. Residues 1412 to 1421 are compositionally biased toward polar residues; it reads FTGNSNSPKS.

This sequence belongs to the RHS/WapA nuclease family. In terms of assembly, the toxic domain forms a 1:1 complex with the DddI immunity protein.

The protein localises to the membrane. The enzyme catalyses a 2'-deoxycytidine in double-stranded DNA + H2O + H(+) = a 2'-deoxyuridine in double-stranded DNA + NH4(+). Its function is as follows. Toxic component of a toxin-immunity protein module, which functions as a cellular contact-dependent growth inhibition (CDI) system. CDI modules allow bacteria to communicate with and inhibit the growth of closely related neighboring bacteria in a contact-dependent fashion. Bacteria that have this module inhibit or kill bacteria without it, giving them a growth advantage. Probably specifically inhibited by cognate immunity protein DddI. The C-terminal 163 residue fragment has double-stranded DNA cytidine deaminase activity; it does not deaminate ssDNA, ssRNA or dsRNA. Leads to C:G to T:A conversions in deaminated DNA. Preferentially deaminates 5'-TC-3' substrates. The polypeptide is Double-stranded DNA deaminase toxin A (Burkholderia cenocepacia (strain H111)).